The following is a 158-amino-acid chain: Crossover junction endodeoxyribonuclease RuvC (158 aa).

Active-site residues include D7, E67, and D140. Mg(2+)-binding residues include D7, E67, and D140.

It belongs to the RuvC family. In terms of assembly, homodimer which binds Holliday junction (HJ) DNA. The HJ becomes 2-fold symmetrical on binding to RuvC with unstacked arms; it has a different conformation from HJ DNA in complex with RuvA. In the full resolvosome a probable DNA-RuvA(4)-RuvB(12)-RuvC(2) complex forms which resolves the HJ. The cofactor is Mg(2+).

The protein localises to the cytoplasm. The enzyme catalyses Endonucleolytic cleavage at a junction such as a reciprocal single-stranded crossover between two homologous DNA duplexes (Holliday junction).. Functionally, the RuvA-RuvB-RuvC complex processes Holliday junction (HJ) DNA during genetic recombination and DNA repair. Endonuclease that resolves HJ intermediates. Cleaves cruciform DNA by making single-stranded nicks across the HJ at symmetrical positions within the homologous arms, yielding a 5'-phosphate and a 3'-hydroxyl group; requires a central core of homology in the junction. The consensus cleavage sequence is 5'-(A/T)TT(C/G)-3'. Cleavage occurs on the 3'-side of the TT dinucleotide at the point of strand exchange. HJ branch migration catalyzed by RuvA-RuvB allows RuvC to scan DNA until it finds its consensus sequence, where it cleaves and resolves the cruciform DNA. This Dictyoglomus turgidum (strain DSM 6724 / Z-1310) protein is Crossover junction endodeoxyribonuclease RuvC.